Consider the following 504-residue polypeptide: Cytochrome P450 monooxygenase gliF (504 aa).

A helical transmembrane segment spans residues 13–31 (AVAVSFGVGLLYWVYRLLL). N-linked (GlcNAc...) asparagine glycosylation is found at Asn-197 and Asn-299. Cys-449 provides a ligand contact to heme.

It belongs to the cytochrome P450 family. Heme serves as cofactor.

Its subcellular location is the membrane. It functions in the pathway mycotoxin biosynthesis. Cytochrome P450 monooxygenase; part of the gene cluster that mediates the biosynthesis of gliotoxin, a member of the epipolythiodioxopiperazine (ETP) class of toxins characterized by a disulfide bridged cyclic dipeptide. The first step in gliotoxin biosynthesis is the condensation of serine and phenylalanine to form the cyclo-L-phenylalanyl-L-serine diketopiperazine (DKP) by the NRPS gliP. GliP is also able to produce the DKP cyclo-L-tryptophanyl-L-serine, suggesting that the substrate specificity of the first adenylation (A) domain in gliP is sufficiently relaxed to accommodate both L-Phe and L-Trp. The cytochrome P450 monooxygenase gliC has been shown to catalyze the subsequent hydroxylation of the alpha-carbon of L-Phe in cyclo-L-phenylalanyl-L-serine whereas the second cytochrome P450 enzyme, gliF, is presumably involved in the modification of the DKP side chain. The glutathione S-transferase (GST) gliG then forms a bis-glutathionylated biosynthetic intermediate which is responsible for the sulfurization of gliotoxin. This bis-glutathionylated intermediate is subsequently processed by the gamma-glutamyl cyclotransferase gliK to remove both gamma-glutamyl moieties. Subsequent processing via gliI yields a biosynthetic intermediate, which is N-methylated via the N-methyltransferase gliN, before the gliotoxin oxidoreductase gliT-mediated disulfide bridge closure. GliN-mediated amide methylation confers stability to ETP, damping the spontaneous formation of tri- and tetrasulfides. Intracellular dithiol gliotoxin oxidized by gliT is subsequently effluxed by gliA. Gliotoxin contributes to pathogenesis during invasive aspergillosis. In macrophages and neutrophils, gliotoxin showed inhibition of various different cell functions including cytokine production, antigen presentation, phagocytosis, and production of reactive oxygen species. This chain is Cytochrome P450 monooxygenase gliF, found in Aspergillus fumigatus (strain ATCC MYA-4609 / CBS 101355 / FGSC A1100 / Af293) (Neosartorya fumigata).